We begin with the raw amino-acid sequence, 215 residues long: Cytochrome b6 (215 aa).

A helical transmembrane segment spans residues 32–52; it reads IFYCFGGLVLTCFLIQVATGF. Residue Cys35 participates in heme c binding. Heme b is bound by residues His86 and His100. A run of 3 helical transmembrane segments spans residues 90–110, 116–136, and 186–206; these read ASMMVLMMVLHVFRVYLTGGF, LTWVTGVTLSVVTVSFGVTGY, and AHTFVLPLAAAVLMLTHFLMI. Heme b contacts are provided by His187 and His202.

Belongs to the cytochrome b family. PetB subfamily. In terms of assembly, the 4 large subunits of the cytochrome b6-f complex are cytochrome b6, subunit IV (17 kDa polypeptide, PetD), cytochrome f and the Rieske protein, while the 4 small subunits are PetG, PetL, PetM and PetN. The complex functions as a dimer. Heme b is required as a cofactor. It depends on heme c as a cofactor.

The protein localises to the plastid. The protein resides in the chloroplast thylakoid membrane. In terms of biological role, component of the cytochrome b6-f complex, which mediates electron transfer between photosystem II (PSII) and photosystem I (PSI), cyclic electron flow around PSI, and state transitions. The chain is Cytochrome b6 from Phaeodactylum tricornutum (strain CCAP 1055/1).